A 992-amino-acid polypeptide reads, in one-letter code: RNA-binding protein 12 (992 aa).

The 76-residue stretch at leucine 304–glutamate 379 folds into the RRM 1 domain. Phosphoserine occurs at positions 352 and 375. Positions glutamine 393–serine 424 are disordered. A compositionally biased stretch (polar residues) spans leucine 408–glutamine 417. Residues serine 420, serine 422, and serine 424 each carry the phosphoserine modification. Positions phenylalanine 430–lysine 507 constitute an RRM 2 domain. Serine 525 carries the post-translational modification Phosphoserine. Positions phenylalanine 849–proline 913 are disordered. The segment covering leucine 876 to proline 887 has biased composition (low complexity). An RRM 3 domain is found at threonine 916–glycine 992.

It is found in the nucleus. The polypeptide is RNA-binding protein 12 (Rbm12) (Mus musculus (Mouse)).